A 316-amino-acid chain; its full sequence is Ribosomal protein L11 methyltransferase (316 aa).

4 residues coordinate S-adenosyl-L-methionine: threonine 157, glycine 178, aspartate 200, and asparagine 243.

The protein belongs to the methyltransferase superfamily. PrmA family.

It is found in the cytoplasm. The enzyme catalyses L-lysyl-[protein] + 3 S-adenosyl-L-methionine = N(6),N(6),N(6)-trimethyl-L-lysyl-[protein] + 3 S-adenosyl-L-homocysteine + 3 H(+). Its function is as follows. Methylates ribosomal protein L11. In Streptococcus pneumoniae (strain 70585), this protein is Ribosomal protein L11 methyltransferase.